The sequence spans 457 residues: Glutamate--tRNA ligase 1 (457 aa).

A 'HIGH' region motif is present at residues proline 9–asparagine 19. The 'KMSKS' region signature appears at glycine 250 to arginine 254. Lysine 253 is an ATP binding site.

This sequence belongs to the class-I aminoacyl-tRNA synthetase family. Glutamate--tRNA ligase type 1 subfamily. As to quaternary structure, monomer.

The protein localises to the cytoplasm. The enzyme catalyses tRNA(Glu) + L-glutamate + ATP = L-glutamyl-tRNA(Glu) + AMP + diphosphate. In terms of biological role, catalyzes the attachment of glutamate to tRNA(Glu) in a two-step reaction: glutamate is first activated by ATP to form Glu-AMP and then transferred to the acceptor end of tRNA(Glu). The sequence is that of Glutamate--tRNA ligase 1 from Brucella canis (strain ATCC 23365 / NCTC 10854 / RM-666).